Reading from the N-terminus, the 179-residue chain is Large ribosomal subunit protein uL5 (179 aa).

Belongs to the universal ribosomal protein uL5 family. As to quaternary structure, part of the 50S ribosomal subunit; part of the 5S rRNA/L5/L18/L25 subcomplex. Contacts the 5S rRNA and the P site tRNA. Forms a bridge to the 30S subunit in the 70S ribosome.

In terms of biological role, this is one of the proteins that bind and probably mediate the attachment of the 5S RNA into the large ribosomal subunit, where it forms part of the central protuberance. In the 70S ribosome it contacts protein S13 of the 30S subunit (bridge B1b), connecting the 2 subunits; this bridge is implicated in subunit movement. Contacts the P site tRNA; the 5S rRNA and some of its associated proteins might help stabilize positioning of ribosome-bound tRNAs. In Thiobacillus denitrificans (strain ATCC 25259 / T1), this protein is Large ribosomal subunit protein uL5.